The chain runs to 388 residues: Dual-specificity RNA methyltransferase RlmN (388 aa).

Glu109 acts as the Proton acceptor in catalysis. The Radical SAM core domain maps to 115–354; sequence EDDRATLCVS…TIVRKTRGDD (240 aa). Residues Cys122 and Cys359 are joined by a disulfide bond. [4Fe-4S] cluster contacts are provided by Cys129, Cys133, and Cys136. Residues 183–184, Ser215, 237–239, and Asn316 contribute to the S-adenosyl-L-methionine site; these read GE and SLH. Cys359 acts as the S-methylcysteine intermediate in catalysis.

It belongs to the radical SAM superfamily. RlmN family. It depends on [4Fe-4S] cluster as a cofactor.

It is found in the cytoplasm. The enzyme catalyses adenosine(2503) in 23S rRNA + 2 reduced [2Fe-2S]-[ferredoxin] + 2 S-adenosyl-L-methionine = 2-methyladenosine(2503) in 23S rRNA + 5'-deoxyadenosine + L-methionine + 2 oxidized [2Fe-2S]-[ferredoxin] + S-adenosyl-L-homocysteine. It catalyses the reaction adenosine(37) in tRNA + 2 reduced [2Fe-2S]-[ferredoxin] + 2 S-adenosyl-L-methionine = 2-methyladenosine(37) in tRNA + 5'-deoxyadenosine + L-methionine + 2 oxidized [2Fe-2S]-[ferredoxin] + S-adenosyl-L-homocysteine. Its function is as follows. Specifically methylates position 2 of adenine 2503 in 23S rRNA and position 2 of adenine 37 in tRNAs. m2A2503 modification seems to play a crucial role in the proofreading step occurring at the peptidyl transferase center and thus would serve to optimize ribosomal fidelity. The protein is Dual-specificity RNA methyltransferase RlmN of Salmonella typhi.